The chain runs to 201 residues: FMN-dependent NADH:quinone oxidoreductase (201 aa).

FMN-binding positions include Ser-10, 16–18 (SQS), 96–99 (MYNF), and 140–143 (SRGG).

The protein belongs to the azoreductase type 1 family. In terms of assembly, homodimer. FMN is required as a cofactor.

The catalysed reaction is 2 a quinone + NADH + H(+) = 2 a 1,4-benzosemiquinone + NAD(+). It catalyses the reaction N,N-dimethyl-1,4-phenylenediamine + anthranilate + 2 NAD(+) = 2-(4-dimethylaminophenyl)diazenylbenzoate + 2 NADH + 2 H(+). Functionally, quinone reductase that provides resistance to thiol-specific stress caused by electrophilic quinones. Its function is as follows. Also exhibits azoreductase activity. Catalyzes the reductive cleavage of the azo bond in aromatic azo compounds to the corresponding amines. The chain is FMN-dependent NADH:quinone oxidoreductase from Escherichia coli O6:H1 (strain CFT073 / ATCC 700928 / UPEC).